We begin with the raw amino-acid sequence, 276 residues long: Phosphate import ATP-binding protein PstB (276 aa).

The ABC transporter domain maps to 23-271 (VNNKNIVYDT…PSDQRTEDYI (249 aa)). 62-69 (GPSGCGKS) is a binding site for ATP.

The protein belongs to the ABC transporter superfamily. Phosphate importer (TC 3.A.1.7) family. The complex is composed of two ATP-binding proteins (PstB), two transmembrane proteins (PstC and PstA) and a solute-binding protein (PstS).

It is found in the cell membrane. The enzyme catalyses phosphate(out) + ATP + H2O = ADP + 2 phosphate(in) + H(+). Part of the ABC transporter complex PstSACB involved in phosphate import. Responsible for energy coupling to the transport system. The protein is Phosphate import ATP-binding protein PstB of Oceanobacillus iheyensis (strain DSM 14371 / CIP 107618 / JCM 11309 / KCTC 3954 / HTE831).